Here is a 122-residue protein sequence, read N- to C-terminus: Large ribosomal subunit protein uL14 (122 aa).

The protein belongs to the universal ribosomal protein uL14 family. Part of the 50S ribosomal subunit. Forms a cluster with proteins L3 and L19. In the 70S ribosome, L14 and L19 interact and together make contacts with the 16S rRNA in bridges B5 and B8.

In terms of biological role, binds to 23S rRNA. Forms part of two intersubunit bridges in the 70S ribosome. This is Large ribosomal subunit protein uL14 from Salinispora tropica (strain ATCC BAA-916 / DSM 44818 / JCM 13857 / NBRC 105044 / CNB-440).